A 159-amino-acid polypeptide reads, in one-letter code: Large ribosomal subunit protein uL11 (159 aa).

This sequence belongs to the universal ribosomal protein uL11 family. In terms of assembly, part of the ribosomal stalk of the 50S ribosomal subunit. Interacts with L10 and the large rRNA to form the base of the stalk. L10 forms an elongated spine to which L12 dimers bind in a sequential fashion forming a multimeric L10(L12)X complex.

Functionally, forms part of the ribosomal stalk which helps the ribosome interact with GTP-bound translation factors. This is Large ribosomal subunit protein uL11 from Nitrosopumilus maritimus (strain SCM1).